Here is a 107-residue protein sequence, read N- to C-terminus: Proteinase inhibitor I-A (107 aa).

An N-terminal signal peptide occupies residues 1–22 (MVKFAHVVAFLLLASLIQPLTA). Residues 23–36 (RDLEINVLQLDVSQ) constitute a propeptide that is removed on maturation.

It belongs to the protease inhibitor I13 (potato type I serine protease inhibitor) family.

It is found in the secreted. This is Proteinase inhibitor I-A (TIMPB) from Nicotiana tabacum (Common tobacco).